Here is a 405-residue protein sequence, read N- to C-terminus: MLNIAALRQQQIPLAAEPRSPVPFHILMKPIGPACNLACRYCYYPQDETPVNKMDDARLEQFIRRYIAAQPAGAREINFVWQGGEPLLAGLSFYKKALALQARYAPDGVTISNSLQTNGTLINDAWCRLFREHGFIIGLSLEGNEALQDYHRPDKRGRSTWSAALRGIDLLHQHQVDFNLLVVVHNEMAAHAAAIYDRLVSLGARYLQFQPLMSEGAALREGYQLSADNWGRFMVGIWRQWRKRCDRGRVFVINIEQAWAQYFTHTSGSCVHSARCGSNLVMEPDGQLYACDHLINAEHRLGRLDEQTLAAAVDASVQLPFGQQKSLRRECQTCSVKMVCQGGCPAHLNAAGNNRLCGGYYRFFSDILAPLRPFSRDLNGLKAWRAAFVGTAAYCVAPYPDDIPL.

The 232-residue stretch at 18–249 folds into the Radical SAM core domain; that stretch reads PRSPVPFHIL…QWRKRCDRGR (232 aa). 2 residues coordinate [4Fe-4S] cluster: Cys35 and Cys39. Tyr41 contacts S-adenosyl-L-methionine. Cys42 serves as a coordination point for [4Fe-4S] cluster. 3 residues coordinate S-adenosyl-L-methionine: Gly84, Ser140, and Arg152. [4Fe-4S] cluster-binding residues include Cys270, Cys276, and Cys291. The active-site Proton acceptor is Asp292. 5 residues coordinate [4Fe-4S] cluster: Cys331, Cys334, Cys340, Cys344, and Cys357.

It belongs to the radical SAM superfamily. Anaerobic sulfatase-maturating enzyme family. As to quaternary structure, monomer. Interacts with AtsA prior to its export to the periplasm. [4Fe-4S] cluster is required as a cofactor.

The protein resides in the cytoplasm. The enzyme catalyses L-seryl-[sulfatase] + S-adenosyl-L-methionine = 3-oxo-L-alanyl-[sulfatase] + 5'-deoxyadenosine + L-methionine + H(+). Its pathway is protein modification; sulfatase oxidation. Functionally, involved in 'Ser-type' sulfatase maturation under anaerobic conditions. Catalyzes the post-translational modification of serine ('Ser-72' in the arylsulfatase AtsA) into 3-oxoalanine (also known as C(alpha)-formylglycine (FGly)), by a free radical chemical mechanism initiated via the reductive cleavage of S-adenosyl-L-methionine (SAM). The sequence is that of Serine-type anaerobic sulfatase-maturating enzyme from Klebsiella aerogenes (Enterobacter aerogenes).